Consider the following 186-residue polypeptide: Chromophore lyase CpcS/CpeS 1 (186 aa).

It belongs to the CpcS/CpeS biliprotein lyase family.

Functionally, covalently attaches a chromophore to Cys residue(s) of phycobiliproteins. This chain is Chromophore lyase CpcS/CpeS 1, found in Synechocystis sp. (strain ATCC 27184 / PCC 6803 / Kazusa).